The primary structure comprises 401 residues: Imidazolonepropionase (401 aa).

Positions 66 and 68 each coordinate Fe(3+). Residues His-66 and His-68 each contribute to the Zn(2+) site. The 4-imidazolone-5-propanoate site is built by Arg-75, Tyr-138, and His-171. An N-formimidoyl-L-glutamate-binding site is contributed by Tyr-138. A Fe(3+)-binding site is contributed by His-236. Zn(2+) is bound at residue His-236. Gln-239 contributes to the 4-imidazolone-5-propanoate binding site. Asp-311 is a binding site for Fe(3+). Residue Asp-311 coordinates Zn(2+). Asn-313 and Gly-315 together coordinate N-formimidoyl-L-glutamate. Position 316 (Thr-316) interacts with 4-imidazolone-5-propanoate.

It belongs to the metallo-dependent hydrolases superfamily. HutI family. It depends on Zn(2+) as a cofactor. Requires Fe(3+) as cofactor.

Its subcellular location is the cytoplasm. The enzyme catalyses 4-imidazolone-5-propanoate + H2O = N-formimidoyl-L-glutamate. It participates in amino-acid degradation; L-histidine degradation into L-glutamate; N-formimidoyl-L-glutamate from L-histidine: step 3/3. In terms of biological role, catalyzes the hydrolytic cleavage of the carbon-nitrogen bond in imidazolone-5-propanoate to yield N-formimidoyl-L-glutamate. It is the third step in the universal histidine degradation pathway. This is Imidazolonepropionase from Pseudomonas fluorescens (strain ATCC BAA-477 / NRRL B-23932 / Pf-5).